The chain runs to 272 residues: Carbonic anhydrase (272 aa).

Zn(2+) is bound by residues Cys39, His98, and Cys101.

It belongs to the beta-class carbonic anhydrase family. A hexamer formed by a trimer of dimers. Purified from carboxysomes with the both RuBisCO subunits and the full-length form of CcmM, probably interacts with the N-terminus of CcmM. Zn(2+) is required as a cofactor.

Its subcellular location is the carboxysome. It carries out the reaction hydrogencarbonate + H(+) = CO2 + H2O. Functionally, reversible hydration of carbon dioxide. Essential to photosynthetic carbon dioxide fixation, supplies CO(2) to RuBisCO (ribulose bisphosphate carboxylase, rbcL-rbcS) in the carboxysome. Loss of activity results in limitation of CO(2) availability to RuBisCO located in the cytoplasm. The polypeptide is Carbonic anhydrase (Synechococcus elongatus (strain ATCC 33912 / PCC 7942 / FACHB-805) (Anacystis nidulans R2)).